Here is a 415-residue protein sequence, read N- to C-terminus: Multifunctional CCA protein (415 aa).

Residues G8 and R11 each contribute to the ATP site. Residues G8 and R11 each contribute to the CTP site. Positions 21 and 23 each coordinate Mg(2+). Residues R91, R143, and R146 each coordinate ATP. CTP-binding residues include R91, R143, and R146. Residues 232–333 (TGVHVMMVID…TRLLERCDAL (102 aa)) form the HD domain.

Belongs to the tRNA nucleotidyltransferase/poly(A) polymerase family. Bacterial CCA-adding enzyme type 1 subfamily. Monomer. Can also form homodimers and oligomers. Requires Mg(2+) as cofactor. It depends on Ni(2+) as a cofactor.

It carries out the reaction a tRNA precursor + 2 CTP + ATP = a tRNA with a 3' CCA end + 3 diphosphate. The catalysed reaction is a tRNA with a 3' CCA end + 2 CTP + ATP = a tRNA with a 3' CCACCA end + 3 diphosphate. In terms of biological role, catalyzes the addition and repair of the essential 3'-terminal CCA sequence in tRNAs without using a nucleic acid template. Adds these three nucleotides in the order of C, C, and A to the tRNA nucleotide-73, using CTP and ATP as substrates and producing inorganic pyrophosphate. tRNA 3'-terminal CCA addition is required both for tRNA processing and repair. Also involved in tRNA surveillance by mediating tandem CCA addition to generate a CCACCA at the 3' terminus of unstable tRNAs. While stable tRNAs receive only 3'-terminal CCA, unstable tRNAs are marked with CCACCA and rapidly degraded. In Cupriavidus pinatubonensis (strain JMP 134 / LMG 1197) (Cupriavidus necator (strain JMP 134)), this protein is Multifunctional CCA protein.